The chain runs to 189 residues: Elongation factor P (189 aa).

The protein belongs to the elongation factor P family.

It is found in the cytoplasm. It participates in protein biosynthesis; polypeptide chain elongation. In terms of biological role, involved in peptide bond synthesis. Stimulates efficient translation and peptide-bond synthesis on native or reconstituted 70S ribosomes in vitro. Probably functions indirectly by altering the affinity of the ribosome for aminoacyl-tRNA, thus increasing their reactivity as acceptors for peptidyl transferase. In Pseudomonas fluorescens (strain Pf0-1), this protein is Elongation factor P.